The following is a 257-amino-acid chain: Imidazole glycerol phosphate synthase subunit HisF (257 aa).

Active-site residues include Asp-11 and Asp-130.

The protein belongs to the HisA/HisF family. Heterodimer of HisH and HisF.

Its subcellular location is the cytoplasm. It catalyses the reaction 5-[(5-phospho-1-deoxy-D-ribulos-1-ylimino)methylamino]-1-(5-phospho-beta-D-ribosyl)imidazole-4-carboxamide + L-glutamine = D-erythro-1-(imidazol-4-yl)glycerol 3-phosphate + 5-amino-1-(5-phospho-beta-D-ribosyl)imidazole-4-carboxamide + L-glutamate + H(+). It participates in amino-acid biosynthesis; L-histidine biosynthesis; L-histidine from 5-phospho-alpha-D-ribose 1-diphosphate: step 5/9. Its function is as follows. IGPS catalyzes the conversion of PRFAR and glutamine to IGP, AICAR and glutamate. The HisF subunit catalyzes the cyclization activity that produces IGP and AICAR from PRFAR using the ammonia provided by the HisH subunit. The protein is Imidazole glycerol phosphate synthase subunit HisF of Afipia carboxidovorans (strain ATCC 49405 / DSM 1227 / KCTC 32145 / OM5) (Oligotropha carboxidovorans).